Reading from the N-terminus, the 155-residue chain is Transcriptional repressor NrdR (155 aa).

Residues 3 to 34 (CPFCGNVDTQVKDSRPAEDHVSIRRRRFCPAC) fold into a zinc finger. Residues 49 to 139 (LVVIKTNGKR…VYKNFQAADD (91 aa)) enclose the ATP-cone domain.

Belongs to the NrdR family. The cofactor is Zn(2+).

Functionally, negatively regulates transcription of bacterial ribonucleotide reductase nrd genes and operons by binding to NrdR-boxes. The protein is Transcriptional repressor NrdR of Ruegeria sp. (strain TM1040) (Silicibacter sp.).